The following is a 114-amino-acid chain: Large ribosomal subunit protein uL22 (114 aa).

It belongs to the universal ribosomal protein uL22 family. In terms of assembly, part of the 50S ribosomal subunit.

In terms of biological role, this protein binds specifically to 23S rRNA; its binding is stimulated by other ribosomal proteins, e.g. L4, L17, and L20. It is important during the early stages of 50S assembly. It makes multiple contacts with different domains of the 23S rRNA in the assembled 50S subunit and ribosome. Its function is as follows. The globular domain of the protein is located near the polypeptide exit tunnel on the outside of the subunit, while an extended beta-hairpin is found that lines the wall of the exit tunnel in the center of the 70S ribosome. The sequence is that of Large ribosomal subunit protein uL22 from Desulfitobacterium hafniense (strain Y51).